The following is a 635-amino-acid chain: Threonine--tRNA ligase (635 aa).

The TGS domain occupies 1–61 (MIKITLKDGK…HKDSSLEILT (61 aa)). The segment at 242–532 (DHRKLGKELD…LIEQYAGAFP (291 aa)) is catalytic. Cys333, His384, and His509 together coordinate Zn(2+).

This sequence belongs to the class-II aminoacyl-tRNA synthetase family. Homodimer. The cofactor is Zn(2+).

The protein resides in the cytoplasm. The catalysed reaction is tRNA(Thr) + L-threonine + ATP = L-threonyl-tRNA(Thr) + AMP + diphosphate + H(+). Functionally, catalyzes the attachment of threonine to tRNA(Thr) in a two-step reaction: L-threonine is first activated by ATP to form Thr-AMP and then transferred to the acceptor end of tRNA(Thr). Also edits incorrectly charged L-seryl-tRNA(Thr). The sequence is that of Threonine--tRNA ligase from Clostridium botulinum (strain Okra / Type B1).